Consider the following 189-residue polypeptide: Cytidylate kinase (189 aa).

7–15 (GPPGSGKTS) contributes to the ATP binding site.

It belongs to the cytidylate kinase family. Type 2 subfamily.

The protein localises to the cytoplasm. The enzyme catalyses CMP + ATP = CDP + ADP. It carries out the reaction dCMP + ATP = dCDP + ADP. In Saccharolobus islandicus (strain L.S.2.15 / Lassen #1) (Sulfolobus islandicus), this protein is Cytidylate kinase.